Consider the following 388-residue polypeptide: Putative membrane protein MJ1562 (388 aa).

Transmembrane regions (helical) follow at residues 22-42 (FLML…ATNV), 219-239 (SQSF…IIYF), 246-266 (IMPL…MGLL), 273-293 (ATAG…IHLM), 320-340 (AVMA…LAPL), and 351-371 (ALGI…LIVI).

It belongs to the resistance-nodulation-cell division (RND) (TC 2.A.6) family. MmpL subfamily.

It is found in the cell membrane. This chain is Putative membrane protein MJ1562, found in Methanocaldococcus jannaschii (strain ATCC 43067 / DSM 2661 / JAL-1 / JCM 10045 / NBRC 100440) (Methanococcus jannaschii).